A 311-amino-acid chain; its full sequence is Olfactory receptor-like protein OLF1 (311 aa).

Residues 1–24 (MDGNYTLVTEFILLGFPTRPELQI) lie on the Extracellular side of the membrane. An N-linked (GlcNAc...) asparagine glycan is attached at asparagine 4. A helical membrane pass occupies residues 25-48 (VLFLVFLTLYGIILTGNIGLMMLI). Residues 49–56 (RTDPHLQT) are Cytoplasmic-facing. A helical transmembrane segment spans residues 57–78 (PMYFFLSNLSFADLCFSSAIVP). Residues 79-99 (KMLVNFLSENKSISLYGCALQ) are Extracellular-facing. The helical transmembrane segment at 100–119 (FYFSCAFADTESFILAAMAY) threads the bilayer. Residues 120–138 (DRYVAICNPLLYTVVMSRG) are Cytoplasmic-facing. A helical transmembrane segment spans residues 139–157 (ICVWLIVLSYIGGNMSSLV). Topologically, residues 158-195 (HTSFAFILKYCDKNVINHFFCDLPPLLKLSCTDTSVNE) are extracellular. The helical transmembrane segment at 196 to 218 (WLLSTYGSSVEIFCFIVIVISYY) threads the bilayer. The Cytoplasmic portion of the chain corresponds to 219 to 235 (FILRSVLRIRSSSGRKK). A helical transmembrane segment spans residues 236 to 259 (TFSTCASHLTSVAIYQGTLLFIYS). The Extracellular portion of the chain corresponds to 260–271 (RPTYLYTPNTDK). The chain crosses the membrane as a helical span at residues 272 to 291 (IISVFYTIIIPVLNPLIYSL). The Cytoplasmic segment spans residues 292-311 (RNKDVKDAAKRAVRLKVDSS).

It belongs to the G-protein coupled receptor 1 family.

The protein resides in the cell membrane. Putative odorant or sperm cell receptor. The chain is Olfactory receptor-like protein OLF1 from Canis lupus familiaris (Dog).